The chain runs to 145 residues: Histone H2B.1, sperm (145 aa).

Residues 1-52 (MPSQKSPTKRSPTKRSPTKRSPQKGGKGGKGAKRGGKAGKRRRGVQVKRRRR) form a disordered region. 4 consecutive short sequence motifs (SPKK motif) follow at residues 6-9 (SPTK), 11-14 (SPTK), 16-19 (SPTK), and 21-24 (SPQK). Composition is skewed to basic residues over residues 7–22 (PTKR…KRSP) and 30–52 (KGAK…RRRR). Phosphoserine is present on residues S16 and S21. Residue S132 is glycosylated (O-linked (GlcNAc) serine). Residue K140 forms a Glycyl lysine isopeptide (Lys-Gly) (interchain with G-Cter in ubiquitin) linkage.

The protein belongs to the histone H2B family. In terms of assembly, the nucleosome is a histone octamer containing two molecules each of H2A, H2B, H3 and H4 assembled in one H3-H4 heterotetramer and two H2A-H2B heterodimers. The octamer wraps approximately 147 bp of DNA. In terms of processing, monoubiquitination of Lys-140 gives a specific tag for epigenetic transcriptional activation and is also prerequisite for histone H3 'Lys-4' and 'Lys-79' methylation. Phosphorylated on SPKK motifs 3 and 4; which may regulate DNA binding. Dephosphorylated during maturation of spermatids to mature sperm and rephosphorylated at fertilization. Post-translationally, glcNAcylation at Ser-132 promotes monoubiquitination of Lys-140. It fluctuates in response to extracellular glucose, and associates with transcribed genes.

It is found in the nucleus. Its subcellular location is the chromosome. In terms of biological role, core component of nucleosome. Nucleosomes wrap and compact DNA into chromatin, limiting DNA accessibility to the cellular machineries which require DNA as a template. Histones thereby play a central role in transcription regulation, DNA repair, DNA replication and chromosomal stability. DNA accessibility is regulated via a complex set of post-translational modifications of histones, also called histone code, and nucleosome remodeling. The protein is Histone H2B.1, sperm of Parechinus angulosus (Angulate sea urchin).